The following is a 327-amino-acid chain: MPHLADLVASAKAAITSAQDVAALDNVRVEYLGKKGHLTLQMTTLRELPPEERPAAGAVINEAKEQVQQALNARKNELESAALNARLAAETIDVSLPGRRVENGGLHPVTRTIDRIESFFGELGFTVATGPEIEDDYHNFDALNIPGHHPARADHDTFWFDATRLLRTQTSGVQIRTMKNQQPPIRIIAPGRVYRNDYDQTHTPMFHQMEGLIVDKNISFTNLKGTLHDFLRNFFEEDLQIRFRPSYFPFTEPSAEVDVMGKNGKWLEVLGCGMVHPNVLRNVGIDPEVYSGFAFGMGMERLTMLRYGVTDLRAFFENDLRFLKQFK.

Glu-252 contacts Mg(2+).

The protein belongs to the class-II aminoacyl-tRNA synthetase family. Phe-tRNA synthetase alpha subunit type 1 subfamily. As to quaternary structure, tetramer of two alpha and two beta subunits. It depends on Mg(2+) as a cofactor.

The protein resides in the cytoplasm. It carries out the reaction tRNA(Phe) + L-phenylalanine + ATP = L-phenylalanyl-tRNA(Phe) + AMP + diphosphate + H(+). This chain is Phenylalanine--tRNA ligase alpha subunit, found in Cronobacter sakazakii (strain ATCC BAA-894) (Enterobacter sakazakii).